The sequence spans 89 residues: Probable Fe(2+)-trafficking protein (89 aa).

It belongs to the Fe(2+)-trafficking protein family.

Its function is as follows. Could be a mediator in iron transactions between iron acquisition and iron-requiring processes, such as synthesis and/or repair of Fe-S clusters in biosynthetic enzymes. This is Probable Fe(2+)-trafficking protein from Stenotrophomonas maltophilia (strain R551-3).